The sequence spans 79 residues: Acyl carrier protein (79 aa).

The 76-residue stretch at 2-77 folds into the Carrier domain; sequence ADHASKIKDI…DAVAYLEAKV (76 aa). Residue Ser37 is modified to O-(pantetheine 4'-phosphoryl)serine.

The protein belongs to the acyl carrier protein (ACP) family. In terms of processing, 4'-phosphopantetheine is transferred from CoA to a specific serine of apo-ACP by AcpS. This modification is essential for activity because fatty acids are bound in thioester linkage to the sulfhydryl of the prosthetic group.

Its subcellular location is the cytoplasm. It participates in lipid metabolism; fatty acid biosynthesis. Carrier of the growing fatty acid chain in fatty acid biosynthesis. The sequence is that of Acyl carrier protein from Gemmatimonas aurantiaca (strain DSM 14586 / JCM 11422 / NBRC 100505 / T-27).